The sequence spans 158 residues: Salt stress-responsive protein YocM (158 aa).

A sHSP domain is found at 51 to 158 (GKGDASFPSM…GQAKTIVIDD (108 aa)).

Belongs to the small heat shock protein (HSP20) family. As to quaternary structure, forms homodimers, homotetramers and higher oligomers.

The protein resides in the cytoplasm. In terms of biological role, part of the cellular protein quality control system with a specific role in salt stress response. May facilitate protein homeostasis, together with chemical chaperones that accumulate during the salt stress response. Increased levels of YocM protects against both heat and salt stress. In vitro, displays an unusual aggregase chaperone activity. This is Salt stress-responsive protein YocM (yocM) from Bacillus subtilis (strain 168).